A 219-amino-acid polypeptide reads, in one-letter code: Elongation factor Ts (219 aa).

The interval 83–86 (TDFV) is involved in Mg(2+) ion dislocation from EF-Tu.

The protein belongs to the EF-Ts family.

It is found in the cytoplasm. Associates with the EF-Tu.GDP complex and induces the exchange of GDP to GTP. It remains bound to the aminoacyl-tRNA.EF-Tu.GTP complex up to the GTP hydrolysis stage on the ribosome. The chain is Elongation factor Ts from Synechococcus sp. (strain WH7803).